The following is a 125-amino-acid chain: MDMDEMLRWACRKNYNYLTIYYCCVALGADINQAMFHSIQFYNIGNIFFCIDLGANAFEEGKTLAHQKDNSFIASMLSLNCYSMNDSLSLKETDPEVIKRMLKDYHSKNLSIAHKHYINDGFNDI.

This sequence belongs to the asfivirus MGF 360 family. As to quaternary structure, interacts with host STAT1; this interaction mediates STAT1 degradation through apoptosis. Interacts with host STAT2; this interaction mediates STAT2 degradation through the proteasome.

It is found in the host cytoplasm. In terms of biological role, plays a role in virus cell tropism, and may be required for efficient virus replication in macrophages. In addition, inhibits IFN-beta-induced IFN-stimulated genes (ISGs) transcription. Mechanistically, degrades host STAT1 and STAT2 through apoptosis and ubiquitin-proteasome pathways respectively. The sequence is that of Protein MGF 360-9L from African swine fever virus (strain Badajoz 1971 Vero-adapted) (Ba71V).